The primary structure comprises 741 residues: Catalase-peroxidase 2 (741 aa).

Residues 1–27 (MKINTLPTLSALTLAMSLALGAGMATA) form the signal peptide. A cross-link (tryptophyl-tyrosyl-methioninium (Trp-Tyr) (with M-255)) is located at residues 106-229 (WHSAGVYRIF…MGATQMGLIY (124 aa)). H107 functions as the Proton acceptor in the catalytic mechanism. Positions 229-255 (YVNPEGPNGVPDPLASAKEIRDTFGRM) form a cross-link, tryptophyl-tyrosyl-methioninium (Tyr-Met) (with W-106). Residue H270 coordinates heme b.

Belongs to the peroxidase family. Peroxidase/catalase subfamily. Homodimer or homotetramer. Heme b is required as a cofactor. In terms of processing, formation of the three residue Trp-Tyr-Met cross-link is important for the catalase, but not the peroxidase activity of the enzyme.

It carries out the reaction H2O2 + AH2 = A + 2 H2O. The enzyme catalyses 2 H2O2 = O2 + 2 H2O. Its function is as follows. Bifunctional enzyme with both catalase and broad-spectrum peroxidase activity. This chain is Catalase-peroxidase 2, found in Shewanella oneidensis (strain ATCC 700550 / JCM 31522 / CIP 106686 / LMG 19005 / NCIMB 14063 / MR-1).